The primary structure comprises 466 residues: Soluble pyridine nucleotide transhydrogenase (466 aa).

Position 36–45 (36–45 (ERYQNVGGGC)) interacts with FAD.

This sequence belongs to the class-I pyridine nucleotide-disulfide oxidoreductase family. Requires FAD as cofactor.

The protein resides in the cytoplasm. The enzyme catalyses NAD(+) + NADPH = NADH + NADP(+). Its function is as follows. Conversion of NADPH, generated by peripheral catabolic pathways, to NADH, which can enter the respiratory chain for energy generation. The protein is Soluble pyridine nucleotide transhydrogenase of Escherichia coli O127:H6 (strain E2348/69 / EPEC).